A 98-amino-acid chain; its full sequence is NADH-ubiquinone oxidoreductase chain 4L (98 aa).

Helical transmembrane passes span 2–22 (TLTT…TLIF), 29–49 (TLLC…ITAL), and 61–81 (ITTL…LTMV).

The protein belongs to the complex I subunit 4L family. Core subunit of respiratory chain NADH dehydrogenase (Complex I) which is composed of 45 different subunits.

It localises to the mitochondrion inner membrane. The catalysed reaction is a ubiquinone + NADH + 5 H(+)(in) = a ubiquinol + NAD(+) + 4 H(+)(out). Core subunit of the mitochondrial membrane respiratory chain NADH dehydrogenase (Complex I) which catalyzes electron transfer from NADH through the respiratory chain, using ubiquinone as an electron acceptor. Part of the enzyme membrane arm which is embedded in the lipid bilayer and involved in proton translocation. The protein is NADH-ubiquinone oxidoreductase chain 4L (MT-ND4L) of Oxymycterus rufus (Red hocicudo).